The following is a 148-amino-acid chain: Insoluble matrix shell protein 1 (148 aa).

A disordered region spans residues 105-128 (KSGRTEARNTDDSGDPIIDPRTAD).

In terms of tissue distribution, component of the acid-insoluble organic matrix of the calcified shell.

It localises to the secreted. The polypeptide is Insoluble matrix shell protein 1 (Ruditapes philippinarum (Japanese carpet shell)).